The chain runs to 1244 residues: Ras-specific guanine nucleotide-releasing factor 1 (1244 aa).

In terms of domain architecture, PH 1 spans 22-129; it reads DGTRKGYLSK…WVAAIARASY (108 aa). Position 71 is a phosphoserine; by PLK2 (serine 71). Positions 204–229 constitute an IQ domain; the sequence is KKIKKVQSFLRGWLCRRKWKNIIQDY. In terms of domain architecture, DH spans 240-426; the sequence is KRNQVVFSML…EELSRVMHDE (187 aa). The PH 2 domain occupies 456-582; it reads TFVRQGSLIQ…WTSDIIQCVD (127 aa). Serine 575 and serine 611 each carry phosphoserine; by PLK2. The 115-residue stretch at 629 to 743 folds into the N-terminal Ras-GEF domain; it reads KVLQIRYASV…RRRKLSLNIP (115 aa). A disordered region spans residues 707 to 730; sequence GDAPKSPRASRKFSSPPPLAIGTS. Serine 739 is subject to Phosphoserine. Serine 760 and serine 781 each carry phosphoserine; by PLK2. Residues 800-840 are disordered; sequence TLEESSGFRKPTSDILKEESDDDQSDVDDTEVSPPTPKSFR. Residues 818-830 are compositionally biased toward acidic residues; the sequence is ESDDDQSDVDDTE. At serine 854 the chain carries Phosphoserine; by PLK2. The 233-residue stretch at 1009 to 1241 folds into the Ras-GEF domain; the sequence is SAMEIAEQLT…YEASLRIEPK (233 aa).

Homooligomer and heterooligomer with RASGRF2. Interacts with USP8, thereby regulating its stability. Post-translationally, phosphorylated by PLK2, leading to ubiquitination and degradation by the proteasome. In terms of processing, ubiquitinated and degraded following phosphorylation by PLK2. Phosphorylated by SRC and LCK. Phosphorylation by LCK increases its capacity to stimulate the GDP/GTP exchange on Ras, whereas its phosphorylation by SRC seems not to have an effect on stimulation activity.

Its function is as follows. Promotes the exchange of Ras-bound GDP by GTP. The protein is Ras-specific guanine nucleotide-releasing factor 1 (Rasgrf1) of Rattus norvegicus (Rat).